Reading from the N-terminus, the 289-residue chain is Heme oxygenase 1 (289 aa).

Positions 1–12 (MERPQPDSSMPQ) are enriched in polar residues. A disordered region spans residues 1–24 (MERPQPDSSMPQDLSEALKEATKE). Residues 1–266 (MERPQPDSSM…KPQPSVLSQA (266 aa)) lie on the Cytoplasmic side of the membrane. Residues K19, H26, Y135, and R184 each coordinate heme b. The segment at 239–261 (RRAGSKVQDLAPTKASRGKPQPS) is disordered. S243 is modified (phosphoserine). A helical; Anchor for type IV membrane protein membrane pass occupies residues 267–289 (PLLRWVLTLSFLVATVAVGLYAM).

Belongs to the heme oxygenase family. As to quaternary structure, homodimer and higher order homooligomer. Oligomerization is crucial for its stability and function in the endoplasmic reticulum. Interacts with FLVCR2; this interaction is potentiated in the presence of heme. A soluble form arises by proteolytic removal of the membrane anchor.

The protein resides in the endoplasmic reticulum membrane. It carries out the reaction heme b + 3 reduced [NADPH--hemoprotein reductase] + 3 O2 = biliverdin IXalpha + CO + Fe(2+) + 3 oxidized [NADPH--hemoprotein reductase] + 3 H2O + H(+). Its activity is regulated as follows. Inhibited by metalloporphyrins such as Sn-, Co-, Mn- and Zn-protoporphyrins. In terms of biological role, catalyzes the oxidative cleavage of heme at the alpha-methene bridge carbon, released as carbon monoxide (CO), to generate biliverdin IXalpha, while releasing the central heme iron chelate as ferrous iron. Affords protection against programmed cell death and this cytoprotective effect relies on its ability to catabolize free heme and prevent it from sensitizing cells to undergo apoptosis. Functionally, catalyzes the oxidative cleavage of heme at the alpha-methene bridge carbon, released as carbon monoxide (CO), to generate biliverdin IXalpha, while releasing the central heme iron chelate as ferrous iron. The protein is Heme oxygenase 1 (HMOX1) of Bos taurus (Bovine).